The following is a 406-amino-acid chain: Cysteine desulfurase (406 aa).

Lys226 carries the N6-(pyridoxal phosphate)lysine modification. Cys364 serves as the catalytic Cysteine persulfide intermediate.

It belongs to the class-V pyridoxal-phosphate-dependent aminotransferase family. Csd subfamily. Homodimer. Interacts with SufE and the SufBCD complex composed of SufB, SufC and SufD. The interaction with SufE is required to mediate the direct transfer of the sulfur atom from the S-sulfanylcysteine. Pyridoxal 5'-phosphate serves as cofactor.

It is found in the cytoplasm. It carries out the reaction (sulfur carrier)-H + L-cysteine = (sulfur carrier)-SH + L-alanine. The enzyme catalyses L-selenocysteine + AH2 = hydrogenselenide + L-alanine + A + H(+). The protein operates within cofactor biosynthesis; iron-sulfur cluster biosynthesis. Cysteine desulfurases mobilize the sulfur from L-cysteine to yield L-alanine, an essential step in sulfur metabolism for biosynthesis of a variety of sulfur-containing biomolecules. Component of the suf operon, which is activated and required under specific conditions such as oxidative stress and iron limitation. Acts as a potent selenocysteine lyase in vitro, that mobilizes selenium from L-selenocysteine. Selenocysteine lyase activity is however unsure in vivo. The protein is Cysteine desulfurase of Yersinia pestis bv. Antiqua (strain Antiqua).